The chain runs to 305 residues: Coiled-coil domain-containing protein 69 (305 aa).

The N-myristoyl glycine moiety is linked to residue glycine 2. The tract at residues 13 to 41 is disordered; the sequence is LRKKKRQKAHQEGLTSKELNDLNAKSQEP. 2 coiled-coil regions span residues 42 to 167 and 216 to 278; these read NELL…SVLS and MERN…KEQN.

The protein belongs to the CCDC69 family.

Its subcellular location is the cytoplasm. The protein resides in the cytoskeleton. It is found in the spindle. The protein localises to the midbody. May act as a scaffold to regulate the recruitment and assembly of spindle midzone components. The protein is Coiled-coil domain-containing protein 69 (ccdc69) of Xenopus tropicalis (Western clawed frog).